Here is a 236-residue protein sequence, read N- to C-terminus: Ribonuclease 3 (236 aa).

Residues 8–130 (FRRLSQALDY…TFAAVSFDAD (123 aa)) enclose the RNase III domain. E43 provides a ligand contact to Mg(2+). Residue D47 is part of the active site. D116 and E119 together coordinate Mg(2+). E119 is a catalytic residue. A DRBM domain is found at 157 to 227 (DAKTRLQEAL…AEAALTLLEQ (71 aa)).

The protein belongs to the ribonuclease III family. In terms of assembly, homodimer. It depends on Mg(2+) as a cofactor.

It localises to the cytoplasm. It catalyses the reaction Endonucleolytic cleavage to 5'-phosphomonoester.. Its function is as follows. Digests double-stranded RNA. Involved in the processing of primary rRNA transcript to yield the immediate precursors to the large and small rRNAs (23S and 16S). Processes some mRNAs, and tRNAs when they are encoded in the rRNA operon. Processes pre-crRNA and tracrRNA of type II CRISPR loci if present in the organism. The polypeptide is Ribonuclease 3 (Chromobacterium violaceum (strain ATCC 12472 / DSM 30191 / JCM 1249 / CCUG 213 / NBRC 12614 / NCIMB 9131 / NCTC 9757 / MK)).